The following is a 132-amino-acid chain: Bleomycin resistance protein (132 aa).

The region spanning 1–129 is the VOC domain; it reads MLQSIPALPV…DNNLISFFQQ (129 aa).

It belongs to the bleomycin resistance protein family.

In terms of biological role, binding protein with a strong affinity to the bleomycin family of antibiotics. This is Bleomycin resistance protein (bleO) from Geobacillus stearothermophilus (Bacillus stearothermophilus).